A 71-amino-acid polypeptide reads, in one-letter code: Small ribosomal subunit protein bS21 (71 aa).

Residues 39 to 71 are disordered; that stretch reads EKPTQERKRKAAAAVKRQMRRTSRDVTKRKRLY. Over residues 45–71 the composition is skewed to basic residues; the sequence is RKRKAAAAVKRQMRRTSRDVTKRKRLY.

This sequence belongs to the bacterial ribosomal protein bS21 family.

This is Small ribosomal subunit protein bS21 from Xylella fastidiosa (strain M12).